The primary structure comprises 320 residues: ADP/ATP translocase 4 (320 aa).

Over 1-20 (MSNESSKKQSSKKALFDPVS) the chain is Mitochondrial intermembrane. A Solcar 1 repeat occupies 19 to 111 (VSFSKDLLAG…FAFKDKYKEL (93 aa)). The helical transmembrane segment at 21-50 (FSKDLLAGGVAAAVSKTAVAPIERVKLLLQ) threads the bilayer. Over 51-87 (VQASSKQISPEARYKGMLDCLVRIPREQGFLSYWRGN) the chain is Mitochondrial matrix. A helical membrane pass occupies residues 88–112 (LANVIRYFPTQALNFAFKDKYKELF). Arginine 93 and lysine 105 together coordinate ADP. Residues 113-122 (MSGVNKEKQF) lie on the Mitochondrial intermembrane side of the membrane. Residues 123–143 (WRWFLANLASGGAAGATSLCV) traverse the membrane as a helical segment. Solcar repeat units lie at residues 124–214 (RWFL…VKGL) and 221–308 (TPFL…IKEF). The Mitochondrial matrix portion of the chain corresponds to 144 to 191 (VYPLDFARTRLGVDIGKGPEQRQFTGLGDCIMKIAKSDGLIGLYQGFG). The chain crosses the membrane as a helical span at residues 192–212 (VSVQGIIVYRASYFGAYDTVK). Topologically, residues 213–223 (GLLPKPKETPF) are mitochondrial intermembrane. A helical transmembrane segment spans residues 224–244 (LVSFIIAQIVTTCSGILSYPF). The Mitochondrial matrix portion of the chain corresponds to 245 to 284 (DTVRRRMMMQSGESDRQYKGTIDCFLKIYRHEGVPAFFRG). Arginine 248 contributes to the ADP binding site. The important for transport activity stretch occupies residues 248-253 (RRRMMM). The Nucleotide carrier signature motif motif lies at 248–253 (RRRMMM). Residues 285 to 302 (AFSNILRGTGGALVLVLY) form a helical membrane-spanning segment. Residues 303 to 320 (DKIKEFLNIDVGGSSSGD) are Mitochondrial intermembrane-facing.

Belongs to the mitochondrial carrier (TC 2.A.29) family. As to quaternary structure, monomer. As to expression, specifically expressed in undifferentiated embryonic stem cells and germ cells. Expression is down-regulated after embryonic stem cells differentiation. In adults, only expressed in developing gametes in testis. In testis, expressed at higher level in spermatocytes. Expression is probably associated with entry of the male germ cells into meiosis. Expressed at very low level in Sertoli cells.

Its subcellular location is the mitochondrion inner membrane. The protein resides in the membrane. It localises to the cell projection. The protein localises to the cilium. It is found in the flagellum membrane. The enzyme catalyses ADP(in) + ATP(out) = ADP(out) + ATP(in). It catalyses the reaction dATP(out) + ADP(in) = dATP(in) + ADP(out). The catalysed reaction is dADP(in) + ADP(out) = dADP(out) + ADP(in). It carries out the reaction H(+)(in) = H(+)(out). Its activity is regulated as follows. The matrix-open state (m-state) is inhibited by the membrane-permeable bongkrekic acid (BKA). The cytoplasmic-open state (c-state) is inhibited by the membrane-impermeable toxic inhibitor carboxyatractyloside (CATR). Proton transporter activity is inhibited by ADP:ATP antiporter activity. Its function is as follows. ADP:ATP antiporter that mediates import of ADP into the mitochondrial matrix for ATP synthesis, and export of ATP out to fuel the cell. Cycles between the cytoplasmic-open state (c-state) and the matrix-open state (m-state): operates by the alternating access mechanism with a single substrate-binding site intermittently exposed to either the cytosolic (c-state) or matrix (m-state) side of the inner mitochondrial membrane. Specifically required during spermatogenesis, probably to mediate ADP:ATP exchange in spermatocytes. Large ATP supplies from mitochondria may be critical for normal progression of spermatogenesis during early stages of meiotic prophase I, including DNA double-strand break repair and chromosomal synapsis. In addition to its ADP:ATP antiporter activity, also involved in mitochondrial uncoupling and mitochondrial permeability transition pore (mPTP) activity. Plays a role in mitochondrial uncoupling by acting as a proton transporter: proton transport uncouples the proton flows via the electron transport chain and ATP synthase to reduce the efficiency of ATP production and cause mitochondrial thermogenesis. Proton transporter activity is inhibited by ADP:ATP antiporter activity, suggesting that SLC25A31/ANT4 acts as a master regulator of mitochondrial energy output by maintaining a delicate balance between ATP production (ADP:ATP antiporter activity) and thermogenesis (proton transporter activity). Proton transporter activity requires free fatty acids as cofactor, but does not transport it. Among nucleotides, may also exchange ADP for dATP and dADP. Also plays a key role in mPTP opening, a non-specific pore that enables free passage of the mitochondrial membranes to solutes of up to 1.5 kDa, and which contributes to cell death. It is however unclear if SLC25A31/ANT4 constitutes a pore-forming component of mPTP or regulates it. The chain is ADP/ATP translocase 4 from Mus musculus (Mouse).